The primary structure comprises 436 residues: 3-ketoacyl-CoA thiolase (436 aa).

The active-site Acyl-thioester intermediate is cysteine 99. Residues histidine 392 and cysteine 422 each act as proton acceptor in the active site.

This sequence belongs to the thiolase-like superfamily. Thiolase family. In terms of assembly, heterotetramer of two alpha chains (FadJ) and two beta chains (FadI).

Its subcellular location is the cytoplasm. It carries out the reaction an acyl-CoA + acetyl-CoA = a 3-oxoacyl-CoA + CoA. The protein operates within lipid metabolism; fatty acid beta-oxidation. Catalyzes the final step of fatty acid oxidation in which acetyl-CoA is released and the CoA ester of a fatty acid two carbons shorter is formed. The sequence is that of 3-ketoacyl-CoA thiolase from Shewanella pealeana (strain ATCC 700345 / ANG-SQ1).